The primary structure comprises 344 residues: uncharacterized protein (344 aa).

Over 1–98 the chain is Cytoplasmic; the sequence is MIDFVKSRDT…NNDEIGIWNY (98 aa). A helical membrane pass occupies residues 99-119; that stretch reads ISVAEMGGVLLFLSYWIWTCL. Position 120 (H120) is a topological domain, lumenal. The helical transmembrane segment at 121–141 threads the bilayer; that stretch reads FSKIIFPAQKVICLYIFLFAL. Over 142 to 198 the chain is Cytoplasmic; that stretch reads NQTLQECIEEYVFSSECIKYRQFYSVYEIIDFLRTNFYRLFVIYCALGFGITRTVPK. A helical transmembrane segment spans residues 199–219; that stretch reads YLMIKGISIVIALCSVYWISL. At 220–222 the chain is on the lumenal side; that stretch reads YKD. A helical membrane pass occupies residues 223–243; it reads VYVVSEIFDMIQYEVSPAIWV. The Cytoplasmic segment spans residues 244-273; the sequence is YSICHLLKQCTSVTTYENASKARFFRRMLN. A helical transmembrane segment spans residues 274 to 294; it reads AFIFIFCASPMLHYLSNIIFG. Residues 295–344 are Lumenal-facing; sequence NFDYRLSVIIGDLFTFMEKIAFPCYIMFPTHNEALAYNRNVAEEAQEKMI.

Belongs to the UPF0742 family.

Its subcellular location is the endoplasmic reticulum. The protein localises to the membrane. This is an uncharacterized protein from Schizosaccharomyces pombe (strain 972 / ATCC 24843) (Fission yeast).